A 359-amino-acid polypeptide reads, in one-letter code: 3-dehydroquinate synthase (359 aa).

Residues 70-75, 105-109, 129-130, lysine 142, lysine 151, and 169-172 contribute to the NAD(+) site; these read DGEQYK, GVIGD, TT, and FYKT. Positions 184, 247, and 264 each coordinate Zn(2+).

The protein belongs to the sugar phosphate cyclases superfamily. Dehydroquinate synthase family. Requires Co(2+) as cofactor. Zn(2+) is required as a cofactor. It depends on NAD(+) as a cofactor.

It is found in the cytoplasm. It catalyses the reaction 7-phospho-2-dehydro-3-deoxy-D-arabino-heptonate = 3-dehydroquinate + phosphate. It functions in the pathway metabolic intermediate biosynthesis; chorismate biosynthesis; chorismate from D-erythrose 4-phosphate and phosphoenolpyruvate: step 2/7. Functionally, catalyzes the conversion of 3-deoxy-D-arabino-heptulosonate 7-phosphate (DAHP) to dehydroquinate (DHQ). This Francisella tularensis subsp. holarctica (strain OSU18) protein is 3-dehydroquinate synthase.